We begin with the raw amino-acid sequence, 142 residues long: MKTFTAKPETVKREWFVVDAAGQTLGRLATEIATRLRGKHKPEYTPHVDTGDYIVVINAEQVRVTGAKSSDKMYYSHSGFPGGIKEINFEKLIAKAPERVIETAVKGMLPKNPLGRDMYRKLKVYAGAAHPHTAQQPQELKI.

It belongs to the universal ribosomal protein uL13 family. In terms of assembly, part of the 50S ribosomal subunit.

Functionally, this protein is one of the early assembly proteins of the 50S ribosomal subunit, although it is not seen to bind rRNA by itself. It is important during the early stages of 50S assembly. In Pseudomonas putida (strain ATCC 700007 / DSM 6899 / JCM 31910 / BCRC 17059 / LMG 24140 / F1), this protein is Large ribosomal subunit protein uL13.